Consider the following 514-residue polypeptide: Developmental and secondary metabolism regulator veA (514 aa).

Residues 26–218 form the Velvet domain; the sequence is NRHLWYQLTV…ADQGCHVRIR (193 aa). The short motif at 40 to 45 is the Nuclear localization signal element; it reads ERARAC. Residues 219-463 are disordered; the sequence is RDVRMRKRDA…PIGSKRKHDQ (245 aa). A compositionally biased stretch (basic and acidic residues) spans 228 to 243; that stretch reads AKSNNGRDRREDDMAR. Residues 256–267 show a composition bias toward low complexity; that stretch reads SAAARARSMSNS. Over residues 386–396 the composition is skewed to polar residues; the sequence is SYPSTPVSSHP. The interval 411 to 448 is PEST; the sequence is KSPSNSVSPSNSSLKITDLLVQPLPSSEPKLEVGSAPC. Residues 412 to 423 are compositionally biased toward low complexity; sequence SPSNSVSPSNSS.

This sequence belongs to the velvet family. VeA subfamily. In terms of assembly, component of the heterotrimeric velvet complex composed of laeA, veA and velB; VeA acting as a bridging protein between laeA and velB.

The protein localises to the nucleus. Its subcellular location is the cytoplasm. Its function is as follows. Component of the velvet transcription factor complex that controls sexual/asexual developmental ratio in response to light, promoting sexual development in the darkness while stimulating asexual sporulation under illumination. The velvet complex hat acts as a global regulator for secondary metabolite gene expression. Controls the expression of the cephalosporin C gene cluster. Regulates hyphal fragmentation. In Hapsidospora chrysogenum (strain ATCC 11550 / CBS 779.69 / DSM 880 / IAM 14645 / JCM 23072 / IMI 49137) (Acremonium chrysogenum), this protein is Developmental and secondary metabolism regulator veA.